The chain runs to 38 residues: Large ribosomal subunit protein bL36 (38 aa).

It belongs to the bacterial ribosomal protein bL36 family.

This Kosmotoga olearia (strain ATCC BAA-1733 / DSM 21960 / TBF 19.5.1) protein is Large ribosomal subunit protein bL36.